The primary structure comprises 200 residues: Dephospho-CoA kinase (200 aa).

Positions 3 to 200 constitute a DPCK domain; it reads IFGLTGGIGS…LNVNNKCNMD (198 aa). Residue 11–16 coordinates ATP; the sequence is GSGKSL.

The protein belongs to the CoaE family.

It is found in the cytoplasm. The catalysed reaction is 3'-dephospho-CoA + ATP = ADP + CoA + H(+). The protein operates within cofactor biosynthesis; coenzyme A biosynthesis; CoA from (R)-pantothenate: step 5/5. Its function is as follows. Catalyzes the phosphorylation of the 3'-hydroxyl group of dephosphocoenzyme A to form coenzyme A. This Ehrlichia canis (strain Jake) protein is Dephospho-CoA kinase.